Reading from the N-terminus, the 349-residue chain is tRNA pseudouridine synthase D (349 aa).

Phenylalanine 27 is a binding site for substrate. The Nucleophile role is filled by aspartate 80. Asparagine 129 is a substrate binding site. One can recognise a TRUD domain in the interval 155 to 303; the sequence is GVPNYFGAQR…VEAARRAMLL (149 aa). Residue phenylalanine 329 coordinates substrate.

It belongs to the pseudouridine synthase TruD family.

It catalyses the reaction uridine(13) in tRNA = pseudouridine(13) in tRNA. In terms of biological role, responsible for synthesis of pseudouridine from uracil-13 in transfer RNAs. The sequence is that of tRNA pseudouridine synthase D from Escherichia coli (strain K12 / MC4100 / BW2952).